A 303-amino-acid polypeptide reads, in one-letter code: Mycothiol acetyltransferase (303 aa).

N-acetyltransferase domains follow at residues 10–156 and 162–303; these read ALPG…LAVP and LAVR…SGPR. Glutamate 41 contacts 1D-myo-inositol 2-(L-cysteinylamino)-2-deoxy-alpha-D-glucopyranoside. 86 to 88 is an acetyl-CoA binding site; the sequence is LLV. Positions 189, 228, and 235 each coordinate 1D-myo-inositol 2-(L-cysteinylamino)-2-deoxy-alpha-D-glucopyranoside. Residues 239-241 and 246-252 contribute to the acetyl-CoA site; these read LGV and SGAGLGR. Tyrosine 272 serves as a coordination point for 1D-myo-inositol 2-(L-cysteinylamino)-2-deoxy-alpha-D-glucopyranoside. 277 to 282 lines the acetyl-CoA pocket; that stretch reads NLRAVR.

Belongs to the acetyltransferase family. MshD subfamily. As to quaternary structure, monomer.

It catalyses the reaction 1D-myo-inositol 2-(L-cysteinylamino)-2-deoxy-alpha-D-glucopyranoside + acetyl-CoA = mycothiol + CoA + H(+). Functionally, catalyzes the transfer of acetyl from acetyl-CoA to desacetylmycothiol (Cys-GlcN-Ins) to form mycothiol. The sequence is that of Mycothiol acetyltransferase from Kineococcus radiotolerans (strain ATCC BAA-149 / DSM 14245 / SRS30216).